The sequence spans 426 residues: Protein EARLY STARVATION 1, chloroplastic (426 aa).

Residues 1–58 constitute a chloroplast transit peptide; that stretch reads MSEMAASSAISLLDIKLRRFGVGASNHELRLTKWFKGDQAGAPTRRFTCFADMLAPIR. Disordered regions lie at residues 106–127 and 396–426; these read CTPR…TGIA and QPRE…DQPQ. Residues 118–127 are compositionally biased toward basic and acidic residues; it reads TPPKRDTGIA. Over residues 412–426 the composition is skewed to pro residues; it reads PSPPPEPDLPPDQPQ.

This sequence belongs to the ESV1 family.

It is found in the plastid. It localises to the chloroplast stroma. The protein localises to the plastid stroma. Binds preferentially to highly ordered alpha-glucans, such as starch and crystalline maltodextrins. Involved in the organization of the starch granule matrix, thus influencing starch turnover by modulating the accessibility of starch polymers to modifying and degrading enzymes involved in phosphorylation, hydrolyzes and synthesis, including starch synthases (SSI and SSIII), starch phosphorylases (PHS1), isoamylase, beta-amylase, glucan water dikinase (GWD) and phosphoglucan water dikinase (PWD). Prevents GWD- and PWD-mediated starch phosphorylation, and subsequent degradation. Required for the control of starch degradation in leaves and starch distribution in nonphotosynthetic parts (e.g. cells immediately adjacent to veins, columella cells of root caps, stems, flowers and siliques) by limiting the hasty depletion of starch reserves during the night. Promotes gravitropic responses, negative in shoots but positive in roots, by maintaining starch granules (statoliths) accumulation in hypocotyls and roots columella, especially in dark conditions and in the endodermis, where starch is formed from transported glucose-6-phosphates. This chain is Protein EARLY STARVATION 1, chloroplastic, found in Arabidopsis thaliana (Mouse-ear cress).